Consider the following 132-residue polypeptide: MGGVNIYAIIESGGKQYKVTPGQLVEVDLFDLAEGDSIELDKVLMLNDGETVTIGSPTVPGAKVTATVAGHIKGDKVFAYRFKAKSRNHKKTGHRQLYTVLTIGEILTGGAAEKPARKPRAKKTNEVTTDGA.

The interval 112-132 (AEKPARKPRAKKTNEVTTDGA) is disordered.

The protein belongs to the bacterial ribosomal protein bL21 family. As to quaternary structure, part of the 50S ribosomal subunit. Contacts protein L20.

In terms of biological role, this protein binds to 23S rRNA in the presence of protein L20. This Dehalococcoides mccartyi (strain ATCC BAA-2266 / KCTC 15142 / 195) (Dehalococcoides ethenogenes (strain 195)) protein is Large ribosomal subunit protein bL21.